The sequence spans 355 residues: Homeobox protein knotted-1-like 12 (355 aa).

2 disordered regions span residues Ala-52–Glu-82 and Glu-207–Glu-233. A compositionally biased stretch (basic residues) spans Gly-60–His-75. A compositionally biased stretch (basic and acidic residues) spans Pro-218–Glu-233. Residues Glu-236–Phe-256 enclose the ELK domain. Positions Ser-257–Ser-320 form a DNA-binding region, homeobox; TALE-type.

The protein belongs to the TALE/KNOX homeobox family. Expressed in stems, rachis and inflorescence.

It localises to the nucleus. In terms of biological role, probable transcription factor that may be involved in shoot formation during embryogenesis. The sequence is that of Homeobox protein knotted-1-like 12 (OSH15) from Oryza sativa subsp. japonica (Rice).